Consider the following 43-residue polypeptide: Mu-conotoxin-like Cal 12.2c (43 aa).

R1 is a propeptide. 4 disulfides stabilise this stretch: C4–C16, C11–C24, C18–C29, and C23–C35. At W31 the chain carries 6'-bromotryptophan. P36 carries the post-translational modification 4-hydroxyproline. W40 bears the 6'-bromotryptophan mark.

As to expression, expressed by the venom duct.

The protein localises to the secreted. Functionally, mu-conotoxins block voltage-gated sodium channels. This toxin reversibly blocks voltage-gated sodium channel in cephalopods, with no alteration in the voltage dependence of sodium conductance or on the kinetics of inactivation. This chain is Mu-conotoxin-like Cal 12.2c, found in Californiconus californicus (California cone).